Reading from the N-terminus, the 124-residue chain is Small ribosomal subunit protein uS12 (124 aa).

Positions 1 to 32 are disordered; sequence MPTINQLVRKGRRDKTAKVKTAALKGSPQRRG. Aspartate 89 carries the 3-methylthioaspartic acid modification. The interval 104 to 124 is disordered; the sequence is TQGVKGRKQARSRYGAKKEKS. Residues 108–118 are compositionally biased toward basic residues; the sequence is KGRKQARSRYG.

This sequence belongs to the universal ribosomal protein uS12 family. Part of the 30S ribosomal subunit. Contacts proteins S8 and S17. May interact with IF1 in the 30S initiation complex.

In terms of biological role, with S4 and S5 plays an important role in translational accuracy. Its function is as follows. Interacts with and stabilizes bases of the 16S rRNA that are involved in tRNA selection in the A site and with the mRNA backbone. Located at the interface of the 30S and 50S subunits, it traverses the body of the 30S subunit contacting proteins on the other side and probably holding the rRNA structure together. The combined cluster of proteins S8, S12 and S17 appears to hold together the shoulder and platform of the 30S subunit. In Rhodococcus jostii (strain RHA1), this protein is Small ribosomal subunit protein uS12.